The primary structure comprises 322 residues: Sideroflexin fsf1 (322 aa).

A run of 4 helical transmembrane segments spans residues 143 to 163 (SYIY…KIVP), 175 to 195 (VLGR…NVFL), 229 to 249 (TALS…LVLM), and 269 to 289 (LGLI…VFPA).

The protein belongs to the sideroflexin family.

Its subcellular location is the mitochondrion membrane. Its function is as follows. Mitochondrial amino-acid transporter that mediates transport of serine into mitochondria. This Schizosaccharomyces pombe (strain 972 / ATCC 24843) (Fission yeast) protein is Sideroflexin fsf1.